Here is a 457-residue protein sequence, read N- to C-terminus: Protein N-terminal amidase (457 aa).

The 435-residue stretch at 19-453 folds into the CN hydrolase domain; that stretch reads LKVLVIQLNP…EGAILREVQF (435 aa). Glu63 (proton acceptor) is an active-site residue. The active-site Proton donor is the Lys136. The active-site Nucleophile is Cys187.

It belongs to the carbon-nitrogen hydrolase superfamily.

In terms of biological role, deamidates N-terminal Asn and Gln. Component of a targeting complex in the N-end rule pathway. The protein is Protein N-terminal amidase (NTA1) of Saccharomyces cerevisiae (strain ATCC 204508 / S288c) (Baker's yeast).